The chain runs to 310 residues: 4-diphosphocytidyl-2-C-methyl-D-erythritol kinase (310 aa).

Residue lysine 20 is part of the active site. 106–116 serves as a coordination point for ATP; that stretch reads PMGGGLGGGSS. Aspartate 148 is an active-site residue.

It belongs to the GHMP kinase family. IspE subfamily. In terms of assembly, homodimer.

The enzyme catalyses 4-CDP-2-C-methyl-D-erythritol + ATP = 4-CDP-2-C-methyl-D-erythritol 2-phosphate + ADP + H(+). It functions in the pathway isoprenoid biosynthesis; isopentenyl diphosphate biosynthesis via DXP pathway; isopentenyl diphosphate from 1-deoxy-D-xylulose 5-phosphate: step 3/6. Functionally, catalyzes the phosphorylation of the position 2 hydroxy group of 4-diphosphocytidyl-2C-methyl-D-erythritol. This chain is 4-diphosphocytidyl-2-C-methyl-D-erythritol kinase, found in Yersinia pseudotuberculosis serotype O:3 (strain YPIII).